Reading from the N-terminus, the 436-residue chain is uncharacterized protein (436 aa).

An N-terminal signal peptide occupies residues 1–20; sequence MKCAVAILLVCLTLQQAAYG. 3 coiled-coil regions span residues 25 to 87, 154 to 207, and 247 to 329; these read EEVK…ALRN, MRKT…NSVE, and ESWG…ASLL. Residues 371 to 390 show a composition bias toward acidic residues; that stretch reads EEEIAPSTEEDGSEELEADS. Residues 371–419 are disordered; it reads EEEIAPSTEEDGSEELEADSYDSKVGGESPISQRTEERQGAEERSRLRR. The span at 404 to 415 shows a compositional bias: basic and acidic residues; it reads RTEERQGAEERS.

As to expression, component of the acid-insoluble organic matrix of the aragonitic skeleton (at protein level).

Its subcellular location is the secreted. This is an uncharacterized protein from Acropora millepora (Staghorn coral).